Reading from the N-terminus, the 243-residue chain is Ubiquinone/menaquinone biosynthesis C-methyltransferase UbiE (243 aa).

Residues Thr69, Asp90, and 116–117 (DA) each bind S-adenosyl-L-methionine.

Belongs to the class I-like SAM-binding methyltransferase superfamily. MenG/UbiE family.

The enzyme catalyses a 2-demethylmenaquinol + S-adenosyl-L-methionine = a menaquinol + S-adenosyl-L-homocysteine + H(+). It carries out the reaction a 2-methoxy-6-(all-trans-polyprenyl)benzene-1,4-diol + S-adenosyl-L-methionine = a 5-methoxy-2-methyl-3-(all-trans-polyprenyl)benzene-1,4-diol + S-adenosyl-L-homocysteine + H(+). Its pathway is quinol/quinone metabolism; menaquinone biosynthesis; menaquinol from 1,4-dihydroxy-2-naphthoate: step 2/2. It functions in the pathway cofactor biosynthesis; ubiquinone biosynthesis. In terms of biological role, methyltransferase required for the conversion of demethylmenaquinol (DMKH2) to menaquinol (MKH2) and the conversion of 2-polyprenyl-6-methoxy-1,4-benzoquinol (DDMQH2) to 2-polyprenyl-3-methyl-6-methoxy-1,4-benzoquinol (DMQH2). The chain is Ubiquinone/menaquinone biosynthesis C-methyltransferase UbiE from Cupriavidus taiwanensis (strain DSM 17343 / BCRC 17206 / CCUG 44338 / CIP 107171 / LMG 19424 / R1) (Ralstonia taiwanensis (strain LMG 19424)).